Here is a 467-residue protein sequence, read N- to C-terminus: Dihydrolipoyl dehydrogenase 3 (467 aa).

Residues 34 to 43, Lys52, and Ala116 each bind FAD; that span reads EGRETLGGTC. A disulfide bridge links Cys43 with Cys48. NAD(+)-binding positions include 182–186, Glu205, Val239, and 272–275; these read GAGVI and AIGR. FAD is bound by residues Asp314 and Ala322. The active-site Proton acceptor is the His446.

It belongs to the class-I pyridine nucleotide-disulfide oxidoreductase family. As to quaternary structure, homodimer. Requires FAD as cofactor.

Its subcellular location is the cytoplasm. It carries out the reaction N(6)-[(R)-dihydrolipoyl]-L-lysyl-[protein] + NAD(+) = N(6)-[(R)-lipoyl]-L-lysyl-[protein] + NADH + H(+). Its function is as follows. LPD-3 may substitute for lipoamide dehydrogenase of the 2-oxoglutarate dehydrogenase and pyruvate multienzyme complexes when the latter is inactive or missing. The protein is Dihydrolipoyl dehydrogenase 3 (lpd3) of Pseudomonas aeruginosa (strain ATCC 15692 / DSM 22644 / CIP 104116 / JCM 14847 / LMG 12228 / 1C / PRS 101 / PAO1).